Here is a 490-residue protein sequence, read N- to C-terminus: Betaine aldehyde dehydrogenase (490 aa).

Residues Thr-26 and Asp-93 each coordinate K(+). An NAD(+)-binding site is contributed by 150–152 (GAW). Lys-162 (charge relay system) is an active-site residue. 176-179 (KPSE) is an NAD(+) binding site. Val-180 is a binding site for K(+). NAD(+) is bound at residue 230-233 (GVAT). A K(+)-binding site is contributed by Leu-246. Residue Glu-252 is the Proton acceptor of the active site. NAD(+) contacts are provided by Gly-254, Cys-286, and Glu-387. Cys-286 functions as the Nucleophile in the catalytic mechanism. Cys-286 bears the Cysteine sulfenic acid (-SOH) mark. Positions 457 and 460 each coordinate K(+). Residue Glu-464 is the Charge relay system of the active site.

This sequence belongs to the aldehyde dehydrogenase family. Dimer of dimers. It depends on K(+) as a cofactor.

The catalysed reaction is betaine aldehyde + NAD(+) + H2O = glycine betaine + NADH + 2 H(+). Its pathway is amine and polyamine biosynthesis; betaine biosynthesis via choline pathway; betaine from betaine aldehyde: step 1/1. In terms of biological role, involved in the biosynthesis of the osmoprotectant glycine betaine. Catalyzes the irreversible oxidation of betaine aldehyde to the corresponding acid. This Stenotrophomonas maltophilia (strain R551-3) protein is Betaine aldehyde dehydrogenase.